The following is a 244-amino-acid chain: MRKLILATFLLLAPTALLASGGGEHLESANIDLRDQASLQRGAKYFMNYCTGCHSLQYMRYNRLAKDLGIDEIALRQNLLFGDAKPGDLITKAMTDDDALKWFGVVPPDLTLVTRWRSPDWVYTYLKSFYLDDTRPYGVNNVLFPLVGMPHVLGDLQGRQEAVMEPSHEPGGEPTIKGVKLVEEGGLSPQEYDTMVRDITNFLTYAGEPFQLERERIGRYVLLFLGFLFILAYLLKKEYWKDVH.

The N-terminal stretch at 1–19 (MRKLILATFLLLAPTALLA) is a signal peptide. Residues cysteine 50, cysteine 53, and histidine 54 each coordinate heme c. A helical membrane pass occupies residues 220 to 240 (YVLLFLGFLFILAYLLKKEYW).

The main subunits of complex b-c1 are: cytochrome b, cytochrome c1 and the Rieske protein. Binds 1 heme c group covalently per subunit.

The protein localises to the cell membrane. Functionally, component of the ubiquinol-cytochrome c reductase complex (complex III or cytochrome b-c1 complex), which is a respiratory chain that generates an electrochemical potential coupled to ATP synthesis. c1 functions as an electron donor to cytochrome c. The polypeptide is Cytochrome c1 (petC) (Allochromatium vinosum (strain ATCC 17899 / DSM 180 / NBRC 103801 / NCIMB 10441 / D) (Chromatium vinosum)).